The following is a 493-amino-acid chain: Kelch-like protein 42 (493 aa).

The region spanning 5–77 (EMVQIRLEDR…INAGGAREGW (73 aa)) is the BTB domain. Kelch repeat units follow at residues 183–241 (VLVA…ILDN), 242–289 (YLFI…AVNS), 291–332 (LYAI…ECKG), 334–379 (IYVI…SVEE), 381–436 (IYIV…ALHN), and 438–487 (GIYI…SLYL).

Component of the BCR(KLHL42) E3 ubiquitin ligase complex, at least composed of CUL3 and KLHL42. Interacts (via the BTB domain) with CUL3. Interacts (via the kelch domains) with KATNA1.

The protein resides in the cytoplasm. Its subcellular location is the cytoskeleton. The protein localises to the spindle. Its pathway is protein modification; protein ubiquitination. In terms of biological role, substrate-specific adapter of a BCR (BTB-CUL3-RBX1) E3 ubiquitin-protein ligase complex required for mitotic progression and cytokinesis. The BCR(KLHL42) E3 ubiquitin ligase complex mediates the ubiquitination and subsequent degradation of KATNA1. Involved in microtubule dynamics throughout mitosis. The protein is Kelch-like protein 42 (Klhl42) of Mus musculus (Mouse).